We begin with the raw amino-acid sequence, 77 residues long: Oxyopinin-4a (77 aa).

The first 20 residues, 1 to 20, serve as a signal peptide directing secretion; that stretch reads MKISQVFIFVFLLMISVAWA. Residues 21 to 47 constitute a propeptide that is removed on maturation; sequence NEAYEEESNYLSERFDADVEEITPEFR. Cysteine 51 and cysteine 57 are joined by a disulfide.

Expressed by the venom gland.

It is found in the secreted. Its subcellular location is the target cell membrane. Functionally, disrupts cell membranes through the formation of pores. Has antibacterial activity against Gram-positive bacteria S.aureus (MIC=10 uM) and B.subtilis (MIC=0.5 uM) as well as Gram-negative bacteria P.fluorescens (MIC=1 uM) and E.coli (MIC=0.5 uM). Has hemolytic activity against human erythrocytes (EC(50)=7 uM). The chain is Oxyopinin-4a from Oxyopes takobius (Lynx spider).